Here is a 549-residue protein sequence, read N- to C-terminus: Undecaprenyl phosphate-alpha-4-amino-4-deoxy-L-arabinose arabinosyl transferase 2 (549 aa).

12 helical membrane-spanning segments follow: residues 9 to 29 (LLLG…GLWI), 80 to 102 (LFGV…FLIA), 112 to 132 (SFVC…AGYA), 133 to 153 (NLDP…WFAL), 176 to 196 (FMTK…PWML), 204 to 224 (LLLY…PWAL), 259 to 279 (FYLP…PVAF), 290 to 310 (GIAF…LSNG), 312 to 332 (LPTY…HALA), 342 to 362 (ALGL…IGLV), 377 to 397 (SLVL…LQAF), and 402 to 422 (CWAA…AALP).

It belongs to the glycosyltransferase 83 family.

Its subcellular location is the cell inner membrane. It carries out the reaction 4-amino-4-deoxy-alpha-L-arabinopyranosyl di-trans,octa-cis-undecaprenyl phosphate + lipid IVA = lipid IIA + di-trans,octa-cis-undecaprenyl phosphate.. It functions in the pathway lipopolysaccharide metabolism; 4-amino-4-deoxy-beta-L-arabinose-lipid A biosynthesis. In terms of biological role, catalyzes the transfer of the L-Ara4N moiety of the glycolipid undecaprenyl phosphate-alpha-L-Ara4N to lipid A. The modified arabinose is attached to lipid A and is required for resistance to polymyxin and cationic antimicrobial peptides. This chain is Undecaprenyl phosphate-alpha-4-amino-4-deoxy-L-arabinose arabinosyl transferase 2, found in Pseudomonas fluorescens (strain Pf0-1).